A 171-amino-acid polypeptide reads, in one-letter code: Translationally-controlled tumor protein homolog (171 aa).

Residues 1–171 (MKIWKDVFTG…FKHGLEEEKF (171 aa)) form the TCTP domain.

The protein belongs to the TCTP family.

Its subcellular location is the cytoplasm. Its function is as follows. Involved in calcium binding and microtubule stabilization. This chain is Translationally-controlled tumor protein homolog, found in Anopheles gambiae (African malaria mosquito).